The sequence spans 89 residues: Elongation factor 1-beta (89 aa).

This sequence belongs to the EF-1-beta/EF-1-delta family.

Promotes the exchange of GDP for GTP in EF-1-alpha/GDP, thus allowing the regeneration of EF-1-alpha/GTP that could then be used to form the ternary complex EF-1-alpha/GTP/AAtRNA. In Methanococcus maripaludis (strain C5 / ATCC BAA-1333), this protein is Elongation factor 1-beta.